The sequence spans 726 residues: X-ray repair cross-complementing protein 5 (726 aa).

In terms of domain architecture, VWFA spans 8 to 160 (AVVLCMDVGL…ANLKKAEITL (153 aa)). Positions 137 to 164 (LSSPFSVDQLEVIIANLKKAEITLQFFL) are leucine-zipper. Low complexity predominate over residues 175 to 186 (GSSNNRGNAGSS). Residues 175–198 (GSSNNRGNAGSSDRGCGPGKGLSD) form a disordered region. A Ku domain is found at 253–449 (GSSLSIRIVG…NKKFTPTESQ (197 aa)). An EEXXXDL motif motif is present at residues 714-722 (EDEGDVDDL).

It belongs to the ku80 family. As to quaternary structure, heterodimer composed of xrcc5/Ku80 and xrcc6/Ku70. In terms of processing, ubiquitinated via 'Lys-48'-linked polyubiquitination at DNA double strand break sites (DSBs), leading to its release from DSBs and subsequent proteasomal degradation. Polyubiquitination is not required for completion of NHEJ. In terms of tissue distribution, expressed at high levels in oocyte and testis.

It localises to the nucleus. Its function is as follows. Single-stranded DNA-dependent ATP-dependent helicase that plays a key role in DNA non-homologous end joining (NHEJ). In Xenopus laevis (African clawed frog), this protein is X-ray repair cross-complementing protein 5.